The sequence spans 309 residues: Sodium/potassium-transporting ATPase subunit beta-1 (309 aa).

Residues 1–45 (MSKNNGKGAKGEFEFPQPAKKQTFSEMIYNPQEGTFFGRTGKSWS) lie on the Cytoplasmic side of the membrane. A helical; Signal-anchor for type II membrane protein membrane pass occupies residues 46 to 66 (QLLLFYTIFYIVLAALFTICM). Topologically, residues 67 to 309 (QGLLSTISDT…GSVTFQILLD (243 aa)) are extracellular. N-linked (GlcNAc...) asparagine glycosylation is present at Asn-133. Disulfide bonds link Cys-143–Cys-155 and Cys-165–Cys-179. N-linked (GlcNAc...) asparagine glycosylation is present at Asn-211. A disulfide bond links Cys-225 and Cys-282.

This sequence belongs to the X(+)/potassium ATPases subunit beta family. As to quaternary structure, the sodium/potassium-transporting ATPase is composed of a catalytic alpha subunit, an auxiliary non-catalytic beta subunit and an additional regulatory subunit. Interacts with nkain. In terms of tissue distribution, in embryos, it is expressed in the neurons of the CNS and PNS, in Garland cells and posterior spiracles. In adults, it is concentrated in the thorax and abdomen (muscle tissue, digestive system and Malpighian tubules) and weakly expressed in the head. Expression is diffuse in the nervous system.

It localises to the cell membrane. This is the non-catalytic component of the active enzyme, which catalyzes the hydrolysis of ATP coupled with the exchange of Na(+) and K(+) ions across the plasma membrane. The beta subunit regulates, through assembly of alpha/beta heterodimers, the number of sodium pumps transported to the plasma membrane. The chain is Sodium/potassium-transporting ATPase subunit beta-1 (nrv1) from Drosophila melanogaster (Fruit fly).